The primary structure comprises 804 residues: RasGAP-activating-like protein 1 (804 aa).

C2 domains lie at 1–105 and 116–231; these read MAKS…DSWI and VQGE…KGWF. Residues D21, D27, D74, D76, D82, D149, D155, D202, D204, and D210 each contribute to the Ca(2+) site. Positions 317–545 constitute a Ras-GAP domain; that stretch reads GLAGRFLDYL…SRVRDFLDRL (229 aa). Residues 565–672 enclose the PH domain; it reads AIVREGYLLK…WLSALRKASA (108 aa). A Btk-type zinc finger spans residues 674 to 710; the sequence is NPNKLAACHPGAFRSARWTCCLQAERSAAGCSRTHSA. Residues H682, C693, C694, and C704 each coordinate Zn(2+).

The cofactor is Ca(2+). In terms of tissue distribution, highly expressed in thyroid and adrenal medulla, lower expression in brain, spinal cord and trachea. Expressed in melanocytes.

In terms of biological role, probable inhibitory regulator of the Ras-cyclic AMP pathway. Plays a role in dendrite formation by melanocytes. The protein is RasGAP-activating-like protein 1 of Homo sapiens (Human).